Reading from the N-terminus, the 363-residue chain is 3-isopropylmalate dehydrogenase (363 aa).

Residue 78–91 coordinates NAD(+); the sequence is GKKWDYLPIESRPE. The substrate site is built by Arg99, Arg109, Arg138, and Asp227. Mg(2+) contacts are provided by Asp227, Asp251, and Asp255. 285 to 297 lines the NAD(+) pocket; it reads GSAPDIEGKNIAN.

The protein belongs to the isocitrate and isopropylmalate dehydrogenases family. LeuB type 1 subfamily. In terms of assembly, homodimer. Mg(2+) is required as a cofactor. Requires Mn(2+) as cofactor.

The protein localises to the cytoplasm. The catalysed reaction is (2R,3S)-3-isopropylmalate + NAD(+) = 4-methyl-2-oxopentanoate + CO2 + NADH. The protein operates within amino-acid biosynthesis; L-leucine biosynthesis; L-leucine from 3-methyl-2-oxobutanoate: step 3/4. Catalyzes the oxidation of 3-carboxy-2-hydroxy-4-methylpentanoate (3-isopropylmalate) to 3-carboxy-4-methyl-2-oxopentanoate. The product decarboxylates to 4-methyl-2 oxopentanoate. The sequence is that of 3-isopropylmalate dehydrogenase (leuB) from Buchnera aphidicola subsp. Rhopalosiphum padi.